A 496-amino-acid chain; its full sequence is Histidine--tRNA ligase (496 aa).

Belongs to the class-II aminoacyl-tRNA synthetase family. Homodimer.

It is found in the cytoplasm. It catalyses the reaction tRNA(His) + L-histidine + ATP = L-histidyl-tRNA(His) + AMP + diphosphate + H(+). The sequence is that of Histidine--tRNA ligase from Bartonella bacilliformis (strain ATCC 35685 / KC583 / Herrer 020/F12,63).